Here is a 420-residue protein sequence, read N- to C-terminus: ATP phosphoribosyltransferase regulatory subunit (420 aa).

The protein belongs to the class-II aminoacyl-tRNA synthetase family. HisZ subfamily. As to quaternary structure, heteromultimer composed of HisG and HisZ subunits.

The protein localises to the cytoplasm. Its pathway is amino-acid biosynthesis; L-histidine biosynthesis; L-histidine from 5-phospho-alpha-D-ribose 1-diphosphate: step 1/9. Its function is as follows. Required for the first step of histidine biosynthesis. May allow the feedback regulation of ATP phosphoribosyltransferase activity by histidine. This Bacillus cereus (strain G9842) protein is ATP phosphoribosyltransferase regulatory subunit.